We begin with the raw amino-acid sequence, 228 residues long: 7-cyano-7-deazaguanine synthase (228 aa).

10 to 20 serves as a coordination point for ATP; it reads FSGGQDSTTLA. Zn(2+)-binding residues include cysteine 190, cysteine 205, cysteine 208, and cysteine 211.

The protein belongs to the QueC family. The cofactor is Zn(2+).

It catalyses the reaction 7-carboxy-7-deazaguanine + NH4(+) + ATP = 7-cyano-7-deazaguanine + ADP + phosphate + H2O + H(+). It participates in purine metabolism; 7-cyano-7-deazaguanine biosynthesis. Functionally, catalyzes the ATP-dependent conversion of 7-carboxy-7-deazaguanine (CDG) to 7-cyano-7-deazaguanine (preQ(0)). This chain is 7-cyano-7-deazaguanine synthase, found in Helicobacter pylori (strain HPAG1).